The sequence spans 500 residues: ATP synthase subunit beta (500 aa).

Position 157-164 (157-164 (GGAGVGKT)) interacts with ATP.

This sequence belongs to the ATPase alpha/beta chains family. In terms of assembly, F-type ATPases have 2 components, CF(1) - the catalytic core - and CF(0) - the membrane proton channel. CF(1) has five subunits: alpha(3), beta(3), gamma(1), delta(1), epsilon(1). CF(0) has three main subunits: a(1), b(2) and c(9-12). The alpha and beta chains form an alternating ring which encloses part of the gamma chain. CF(1) is attached to CF(0) by a central stalk formed by the gamma and epsilon chains, while a peripheral stalk is formed by the delta and b chains.

Its subcellular location is the cell inner membrane. It catalyses the reaction ATP + H2O + 4 H(+)(in) = ADP + phosphate + 5 H(+)(out). Its function is as follows. Produces ATP from ADP in the presence of a proton gradient across the membrane. The catalytic sites are hosted primarily by the beta subunits. The sequence is that of ATP synthase subunit beta from Salinibacter ruber (strain DSM 13855 / M31).